Consider the following 308-residue polypeptide: Mitochondrial import receptor subunit TOM40B (308 aa).

A disordered region spans residues 1-29 (MGNTLGLAPMGALPRRSPRREEPLPNPGS). Positions 281 to 308 (PLPVTLALGAFLNHWRNRFHCGFSITVG) are required for mitochondrial targeting.

This sequence belongs to the Tom40 family. As to quaternary structure, forms part of the preprotein translocase of the outer mitochondrial membrane (TOM complex) containing TOMM22, TOMM40, TOMM40L and TOMM70. Interacts with mitochondrial targeting sequences.

Its subcellular location is the mitochondrion outer membrane. Potential channel-forming protein implicated in import of protein precursors into mitochondria. In Bos taurus (Bovine), this protein is Mitochondrial import receptor subunit TOM40B.